A 567-amino-acid polypeptide reads, in one-letter code: Oxygen-dependent choline dehydrogenase (567 aa).

4–33 (DYIIIGAGSAGNVLAARLTEDADVTVLLLE) is a binding site for FAD. The active-site Proton acceptor is H473.

It belongs to the GMC oxidoreductase family. It depends on FAD as a cofactor.

It carries out the reaction choline + A = betaine aldehyde + AH2. The enzyme catalyses betaine aldehyde + NAD(+) + H2O = glycine betaine + NADH + 2 H(+). It participates in amine and polyamine biosynthesis; betaine biosynthesis via choline pathway; betaine aldehyde from choline (cytochrome c reductase route): step 1/1. Involved in the biosynthesis of the osmoprotectant glycine betaine. Catalyzes the oxidation of choline to betaine aldehyde and betaine aldehyde to glycine betaine at the same rate. This is Oxygen-dependent choline dehydrogenase from Yersinia pseudotuberculosis serotype IB (strain PB1/+).